Consider the following 82-residue polypeptide: Pigment-dispersing hormone peptides (82 aa).

The first 26 residues, 1 to 26, serve as a signal peptide directing secretion; that stretch reads MIGKYLSWFMLAFLFGFVLESYRVQS. Ala-80 carries the alanine amide modification.

Belongs to the arthropod PDH family. Expressed strongly in the head and weakly in the ventral nerve cord. Not detected in the midgut cecum or hindgut. In the cephalic neural complex, specifically localized to cells within the optic lobe, anteromedian protocerebrum, accessory lobe, tritocerebrum, and subesophageal ganglion.

It localises to the secreted. Functionally, the pigment-dispersing hormone causes the migration of the distal retinal pigment into the proximal end of the pigment chromatophore cells and thus decreases the amount of light entering the retinulas. May also function as a neurotransmitter and/or neuromodulator. This is Pigment-dispersing hormone peptides from Armadillidium vulgare (Pillbug).